The following is a 90-amino-acid chain: Probable Fe(2+)-trafficking protein (90 aa).

Belongs to the Fe(2+)-trafficking protein family.

Could be a mediator in iron transactions between iron acquisition and iron-requiring processes, such as synthesis and/or repair of Fe-S clusters in biosynthetic enzymes. The protein is Probable Fe(2+)-trafficking protein of Bordetella avium (strain 197N).